Consider the following 354-residue polypeptide: 3-isopropylmalate dehydrogenase (354 aa).

73-86 (GPAYDKLDRPLRPE) is a binding site for NAD(+). Residues arginine 93, arginine 103, arginine 131, and aspartate 221 each contribute to the substrate site. Positions 221, 245, and 249 each coordinate Mg(2+). Residue 279–291 (GSAPDIAGQNLAN) coordinates NAD(+).

This sequence belongs to the isocitrate and isopropylmalate dehydrogenases family. LeuB type 1 subfamily. In terms of assembly, homodimer. Mg(2+) is required as a cofactor. Mn(2+) serves as cofactor.

The protein localises to the cytoplasm. The enzyme catalyses (2R,3S)-3-isopropylmalate + NAD(+) = 4-methyl-2-oxopentanoate + CO2 + NADH. Its pathway is amino-acid biosynthesis; L-leucine biosynthesis; L-leucine from 3-methyl-2-oxobutanoate: step 3/4. Functionally, catalyzes the oxidation of 3-carboxy-2-hydroxy-4-methylpentanoate (3-isopropylmalate) to 3-carboxy-4-methyl-2-oxopentanoate. The product decarboxylates to 4-methyl-2 oxopentanoate. The sequence is that of 3-isopropylmalate dehydrogenase from Chromobacterium violaceum (strain ATCC 12472 / DSM 30191 / JCM 1249 / CCUG 213 / NBRC 12614 / NCIMB 9131 / NCTC 9757 / MK).